The following is a 139-amino-acid chain: Cytochrome c-type biogenesis protein CcmE (139 aa).

Residues 1–7 (MTKRQNR) lie on the Cytoplasmic side of the membrane. Residues 8–28 (MTLVALLVIGVSLTGYLGLKA) traverse the membrane as a helical; Signal-anchor for type II membrane protein segment. At 29 to 139 (FNENLLYFFS…ADALEKAKNK (111 aa)) the chain is on the periplasmic side. Heme contacts are provided by H120 and Y124.

Belongs to the CcmE/CycJ family.

It localises to the cell inner membrane. Its function is as follows. Heme chaperone required for the biogenesis of c-type cytochromes. Transiently binds heme delivered by CcmC and transfers the heme to apo-cytochromes in a process facilitated by CcmF and CcmH. The protein is Cytochrome c-type biogenesis protein CcmE of Ruthia magnifica subsp. Calyptogena magnifica.